Here is a 571-residue protein sequence, read N- to C-terminus: Dehydrocurvularin exporter (571 aa).

The segment at 1-34 is disordered; the sequence is MADGSDLENNHKPELDRSQPGSTSNGSQEQKDPD. Positions 8-17 are enriched in basic and acidic residues; that stretch reads ENNHKPELDR. Residues 19–28 are compositionally biased toward polar residues; sequence QPGSTSNGSQ. A glycan (N-linked (GlcNAc...) asparagine) is linked at Asn25. 14 helical membrane-spanning segments follow: residues 47-67, 86-106, 120-140, 143-163, 171-191, 202-222, 238-258, 275-295, 317-337, 350-370, 379-399, 405-425, 443-463, and 514-534; these read ILVMFTIFVSTILVSLEIGII, WYGSATFILAAAASPLWGKLF, FIFLVGSIVAAAAPNSVSVII, AIQGWGASGVLGGTLIVINYV, LLIGTWMAVFMVSTILGPVIG, WCFWINLPVGGPIIVLLLLFL, IILALDLPGFCLLLVSLVCLT, VIATLVMWIVLSIAFLVTEWF, LFCLISYAALYQVMFYLPIYF, VNTLPFLAFFALGAVVSGGVI, FELLGALIMTAGMALIYILDV, MYIGAEVLFGFGVGICNQIPM, IMVMCQTLSGAYFVAIAQSLF, and VFAFSLACAAFAVLLSLIIPF. Positions 538–571 are disordered; that stretch reads PDHGKKDKPATEEAAEEKSEAEGKVSGDKEENHS.

This sequence belongs to the major facilitator superfamily. TCR/Tet family.

Its subcellular location is the cell membrane. Functionally, efflux pump that is probably involved in the export of dehydrocurvularin. This Aspergillus terreus protein is Dehydrocurvularin exporter.